Consider the following 187-residue polypeptide: Benzene 1,2-dioxygenase subunit beta (187 aa).

This sequence belongs to the bacterial ring-hydroxylating dioxygenase beta subunit family. This dioxygenase system consists of four proteins: the two subunits of the hydroxylase component (BnzA and BnzB), a ferredoxin (BnzC) and a ferredoxin reductase (BnzD). [2Fe-2S] cluster is required as a cofactor. It depends on Fe cation as a cofactor.

The enzyme catalyses benzene + NADH + O2 + H(+) = cis-1,2-dihydrobenzene-1,2-diol + NAD(+). It catalyses the reaction toluene + NADH + O2 + H(+) = (1S,2R)-3-methylcyclohexa-3,5-diene-1,2-diol + NAD(+). It functions in the pathway aromatic compound metabolism; benzene degradation; catechol from benzene: step 1/2. Its pathway is xenobiotic degradation; toluene degradation. It participates in xenobiotic degradation; xylene degradation. Functionally, catalyzes both the oxidation of benzene and toluene. The beta subunit may be responsible for the substrate specificity of the enzyme. In Pseudomonas putida (strain ATCC 700007 / DSM 6899 / JCM 31910 / BCRC 17059 / LMG 24140 / F1), this protein is Benzene 1,2-dioxygenase subunit beta (bnzB).